Consider the following 446-residue polypeptide: Methylenetetrahydrofolate--tRNA-(uracil-5-)-methyltransferase TrmFO (446 aa).

Residue 9–14 (GGGMAG) coordinates FAD.

This sequence belongs to the MnmG family. TrmFO subfamily. It depends on FAD as a cofactor.

Its subcellular location is the cytoplasm. The catalysed reaction is uridine(54) in tRNA + (6R)-5,10-methylene-5,6,7,8-tetrahydrofolate + NADH + H(+) = 5-methyluridine(54) in tRNA + (6S)-5,6,7,8-tetrahydrofolate + NAD(+). The enzyme catalyses uridine(54) in tRNA + (6R)-5,10-methylene-5,6,7,8-tetrahydrofolate + NADPH + H(+) = 5-methyluridine(54) in tRNA + (6S)-5,6,7,8-tetrahydrofolate + NADP(+). Catalyzes the folate-dependent formation of 5-methyl-uridine at position 54 (M-5-U54) in all tRNAs. In Ruegeria sp. (strain TM1040) (Silicibacter sp.), this protein is Methylenetetrahydrofolate--tRNA-(uracil-5-)-methyltransferase TrmFO.